A 152-amino-acid chain; its full sequence is Small ribosomal subunit protein uS19 (152 aa).

The protein belongs to the universal ribosomal protein uS19 family.

In terms of biological role, protein S19 forms a complex with S13 that binds strongly to the 16S ribosomal RNA. This is Small ribosomal subunit protein uS19 (rps19) from Methanocaldococcus jannaschii (strain ATCC 43067 / DSM 2661 / JAL-1 / JCM 10045 / NBRC 100440) (Methanococcus jannaschii).